We begin with the raw amino-acid sequence, 493 residues long: Glutamyl-tRNA(Gln) amidotransferase subunit A (493 aa).

Active-site charge relay system residues include Lys-78 and Ser-158. The active-site Acyl-ester intermediate is the Ser-182.

This sequence belongs to the amidase family. GatA subfamily. Heterotrimer of A, B and C subunits.

It carries out the reaction L-glutamyl-tRNA(Gln) + L-glutamine + ATP + H2O = L-glutaminyl-tRNA(Gln) + L-glutamate + ADP + phosphate + H(+). Allows the formation of correctly charged Gln-tRNA(Gln) through the transamidation of misacylated Glu-tRNA(Gln) in organisms which lack glutaminyl-tRNA synthetase. The reaction takes place in the presence of glutamine and ATP through an activated gamma-phospho-Glu-tRNA(Gln). The polypeptide is Glutamyl-tRNA(Gln) amidotransferase subunit A (Rickettsia bellii (strain OSU 85-389)).